The primary structure comprises 535 residues: Bifunctional purine biosynthesis protein PurH (535 aa).

The 145-residue stretch at 1–145 (MAQTALISVS…KNWKDVGVLT (145 aa)) folds into the MGS-like domain.

This sequence belongs to the PurH family.

It catalyses the reaction (6R)-10-formyltetrahydrofolate + 5-amino-1-(5-phospho-beta-D-ribosyl)imidazole-4-carboxamide = 5-formamido-1-(5-phospho-D-ribosyl)imidazole-4-carboxamide + (6S)-5,6,7,8-tetrahydrofolate. The enzyme catalyses IMP + H2O = 5-formamido-1-(5-phospho-D-ribosyl)imidazole-4-carboxamide. Its pathway is purine metabolism; IMP biosynthesis via de novo pathway; 5-formamido-1-(5-phospho-D-ribosyl)imidazole-4-carboxamide from 5-amino-1-(5-phospho-D-ribosyl)imidazole-4-carboxamide (10-formyl THF route): step 1/1. It participates in purine metabolism; IMP biosynthesis via de novo pathway; IMP from 5-formamido-1-(5-phospho-D-ribosyl)imidazole-4-carboxamide: step 1/1. In Variovorax paradoxus (strain S110), this protein is Bifunctional purine biosynthesis protein PurH.